A 72-amino-acid polypeptide reads, in one-letter code: Large ribosomal subunit protein bL31c (72 aa).

Belongs to the bacterial ribosomal protein bL31 family. Type A subfamily. Part of the 50S ribosomal subunit.

Its subcellular location is the plastid. The protein localises to the chloroplast. In terms of biological role, binds the 23S rRNA. The protein is Large ribosomal subunit protein bL31c of Trieres chinensis (Marine centric diatom).